We begin with the raw amino-acid sequence, 368 residues long: (3S,6E)-nerolidol synthase (368 aa).

The Mg(2+) site is built by aspartate 91, asparagine 228, and serine 232. Positions 91 to 95 match the DDXXE motif motif; the sequence is DDLLE.

Belongs to the terpene synthase family. Requires Mg(2+) as cofactor. Mn(2+) is required as a cofactor.

It carries out the reaction (2E,6E)-farnesyl diphosphate + H2O = (3S,6E)-nerolidol + diphosphate. It catalyses the reaction (2E)-geranyl diphosphate + H2O = (S)-linalool + diphosphate. It functions in the pathway secondary metabolite biosynthesis; terpenoid biosynthesis. Sesquiterpene synthase converting farnesyl diphosphate to nerolidol. Also has a monoterpene synthase activity, converting geranyl diphosphate into linalool as the major product. Has no diterpene synthase activity. This is (3S,6E)-nerolidol synthase from Selaginella moellendorffii (Spikemoss).